The following is a 342-amino-acid chain: Probable alcohol acetyltransferase (342 aa).

The transit peptide at 1-38 (MMILGKAGILAQYGTIYVRQNTIRNNLSSCIFKQSLCA) directs the protein to the mitochondrion. Residues 39–46 (FHSLAKVL) constitute a propeptide, removed in mature form. Positions 75–326 (PPIIILHGLF…AGHWVNAEKP (252 aa)) constitute an AB hydrolase-1 domain. Active-site charge relay system residues include serine 152 and histidine 319.

This sequence belongs to the AB hydrolase superfamily. Processed by both the mitochondrial processing peptidase (MPP) and the mitochondrial octapeptidyl aminopeptidase (OCT1).

It is found in the mitochondrion. In terms of biological role, probable alcohol acetyltransferase that uses acetyl-CoA to synthesize acetate esters from various alcohols. Not involved in the synthesis of ethyl acetate. This chain is Probable alcohol acetyltransferase (IMO32), found in Saccharomyces cerevisiae (strain ATCC 204508 / S288c) (Baker's yeast).